Here is a 306-residue protein sequence, read N- to C-terminus: Curved DNA-binding protein (306 aa).

The region spanning 5–69 (DYYAIMGVKP…QRRAEYDQMW (65 aa)) is the J domain.

Its subcellular location is the cytoplasm. It is found in the nucleoid. Its function is as follows. DNA-binding protein that preferentially recognizes a curved DNA sequence. It is probably a functional analog of DnaJ; displays overlapping activities with DnaJ, but functions under different conditions, probably acting as a molecular chaperone in an adaptive response to environmental stresses other than heat shock. Lacks autonomous chaperone activity; binds native substrates and targets them for recognition by DnaK. Its activity is inhibited by the binding of CbpM. This Shigella boydii serotype 18 (strain CDC 3083-94 / BS512) protein is Curved DNA-binding protein.